Consider the following 307-residue polypeptide: Homoserine kinase (307 aa).

Position 85–95 (85–95 (PLTRGLGSSAA)) interacts with ATP.

The protein belongs to the GHMP kinase family. Homoserine kinase subfamily.

The protein localises to the cytoplasm. It carries out the reaction L-homoserine + ATP = O-phospho-L-homoserine + ADP + H(+). It participates in amino-acid biosynthesis; L-threonine biosynthesis; L-threonine from L-aspartate: step 4/5. In terms of biological role, catalyzes the ATP-dependent phosphorylation of L-homoserine to L-homoserine phosphate. The chain is Homoserine kinase from Caldicellulosiruptor bescii (strain ATCC BAA-1888 / DSM 6725 / KCTC 15123 / Z-1320) (Anaerocellum thermophilum).